The sequence spans 196 residues: MSRYRGPRLKKIRRLGALPGLTRKTPKSGSNLKKKFHSGKKEQYRIRLQEKQKLRFHYGLTERQLLRYVHIAGKAKRSTGQVLLQLLEMRLDNTLFRLGMASTIPGARQLVNHRHILVNGRIVNIPSFRCKPRDIITTKDNQRSKDLVRNSIASSDPGKLPKHLTIDTLEYKGLVNKILDRKWVGLKINELLVVEY.

The segment at 16–40 is disordered; it reads GALPGLTRKTPKSGSNLKKKFHSGK. In terms of domain architecture, S4 RNA-binding spans 89–152; it reads MRLDNTLFRL…RSKDLVRNSI (64 aa).

Belongs to the universal ribosomal protein uS4 family. Part of the 30S ribosomal subunit. Contacts protein S5. The interaction surface between S4 and S5 is involved in control of translational fidelity.

It localises to the plastid. The protein localises to the chloroplast. Its function is as follows. One of the primary rRNA binding proteins, it binds directly to 16S rRNA where it nucleates assembly of the body of the 30S subunit. In terms of biological role, with S5 and S12 plays an important role in translational accuracy. This Anthoxanthum odoratum (Sweet vernal grass) protein is Small ribosomal subunit protein uS4c (rps4).